A 271-amino-acid chain; its full sequence is Glutamate racemase (271 aa).

Substrate is bound by residues 12-13 and 44-45; these read DS and YG. Residue cysteine 75 is the Proton donor/acceptor of the active site. Residue 76–77 coordinates substrate; that stretch reads NS. Cysteine 185 acts as the Proton donor/acceptor in catalysis. A substrate-binding site is contributed by 186–187; that stretch reads TH.

This sequence belongs to the aspartate/glutamate racemases family.

It carries out the reaction L-glutamate = D-glutamate. The protein operates within cell wall biogenesis; peptidoglycan biosynthesis. Its function is as follows. Provides the (R)-glutamate required for cell wall biosynthesis. The sequence is that of Glutamate racemase from Mycobacterium bovis (strain ATCC BAA-935 / AF2122/97).